A 213-amino-acid chain; its full sequence is Pyridoxine/pyridoxamine 5'-phosphate oxidase (213 aa).

Residues 60–65 (RMVLMK), 75–76 (YS), K82, and Q104 contribute to the FMN site. K65 contacts substrate. Positions 122 and 126 each coordinate substrate. FMN is bound by residues 139 to 140 (QS) and W184. 190-192 (RLH) is a substrate binding site. R194 contacts FMN.

The protein belongs to the pyridoxamine 5'-phosphate oxidase family. As to quaternary structure, homodimer. The cofactor is FMN.

The enzyme catalyses pyridoxamine 5'-phosphate + O2 + H2O = pyridoxal 5'-phosphate + H2O2 + NH4(+). It catalyses the reaction pyridoxine 5'-phosphate + O2 = pyridoxal 5'-phosphate + H2O2. It participates in cofactor metabolism; pyridoxal 5'-phosphate salvage; pyridoxal 5'-phosphate from pyridoxamine 5'-phosphate: step 1/1. Its pathway is cofactor metabolism; pyridoxal 5'-phosphate salvage; pyridoxal 5'-phosphate from pyridoxine 5'-phosphate: step 1/1. Functionally, catalyzes the oxidation of either pyridoxine 5'-phosphate (PNP) or pyridoxamine 5'-phosphate (PMP) into pyridoxal 5'-phosphate (PLP). In Nitrobacter winogradskyi (strain ATCC 25391 / DSM 10237 / CIP 104748 / NCIMB 11846 / Nb-255), this protein is Pyridoxine/pyridoxamine 5'-phosphate oxidase.